A 426-amino-acid polypeptide reads, in one-letter code: MEPSSWSGSESPAENMERMSDSADKPIDNDAEGVWSPDIEQSFQEALAIYPPCGRRKIILSDEGKMYGRNELIARYIKLRTGKTRTRKQVSSHIQVLARRKSRDFHSKLKDQTAKDKALQHMAAMSSAQIVSATAIHNKLGLPGIPRPTFPGAPGFWPGMIQTGQPGSSQDVKPFVQQAYPIQPAVTAPIPGFEPASAPAPSVPAWQGRSIGTTKLRLVEFSAFLEQQRDPDSYNKHLFVHIGHANHSYSDPLLESVDIRQIYDKFPEKKGGLKELFGKGPQNAFFLVKFWADLNCNIQDDAGAFYGVTSQYESSENMTVTCSTKVCSFGKQVVEKVETEYARFENGRFVYRINRSPMCEYMINFIHKLKHLPEKYMMNSVLENFTILLVVTNRDTQETLLCMACVFEVSNSEHGAQHHIYRLVKD.

M1 carries the post-translational modification N-acetylmethionine. Positions 1–12 are enriched in polar residues; that stretch reads MEPSSWSGSESP. Residues 1–31 form a disordered region; that stretch reads MEPSSWSGSESPAENMERMSDSADKPIDNDA. At S11 the chain carries Phosphoserine. Residues 15–28 show a composition bias toward basic and acidic residues; sequence NMERMSDSADKPID. Positions 28 to 104 form a DNA-binding region, TEA; it reads DNDAEGVWSP…QVLARRKSRD (77 aa). K108 carries the post-translational modification N6-lactoyllysine. Positions 167 to 426 are transcriptional activation; sequence GSSQDVKPFV…QHHIYRLVKD (260 aa).

In terms of assembly, interacts with YAP1 and WWTR1/TAZ. Post-translationally, lactylation by AARS1 promotes nuclear localization and stabilization of YAP1, leading to increased Hippo signaling pathway. Delactylated by SIRT1. In terms of tissue distribution, preferentially expressed in skeletal muscle. Lower levels in pancreas, placenta, and heart.

Its subcellular location is the nucleus. Transcription factor which plays a key role in the Hippo signaling pathway, a pathway involved in organ size control and tumor suppression by restricting proliferation and promoting apoptosis. The core of this pathway is composed of a kinase cascade wherein MST1/MST2, in complex with its regulatory protein SAV1, phosphorylates and activates LATS1/2 in complex with its regulatory protein MOB1, which in turn phosphorylates and inactivates YAP1 oncoprotein and WWTR1/TAZ. Acts by mediating gene expression of YAP1 and WWTR1/TAZ, thereby regulating cell proliferation, migration and epithelial mesenchymal transition (EMT) induction. Binds specifically and cooperatively to the SPH and GT-IIC 'enhansons' (5'-GTGGAATGT-3') and activates transcription in vivo in a cell-specific manner. The activation function appears to be mediated by a limiting cell-specific transcriptional intermediary factor (TIF). Involved in cardiac development. Binds to the M-CAT motif. The sequence is that of Transcriptional enhancer factor TEF-1 (TEAD1) from Homo sapiens (Human).